A 155-amino-acid polypeptide reads, in one-letter code: Small ribosomal subunit protein bS16 (155 aa).

The tract at residues 100–155 (EAGIPDPAPSTEEPAAVCEASAEMAGQPGEVEPAGAAAEPNSQEPEPEEEKPQVEA) is disordered. A compositionally biased stretch (low complexity) spans 124–143 (AGQPGEVEPAGAAAEPNSQE).

Belongs to the bacterial ribosomal protein bS16 family.

This Synechococcus sp. (strain JA-3-3Ab) (Cyanobacteria bacterium Yellowstone A-Prime) protein is Small ribosomal subunit protein bS16.